A 127-amino-acid polypeptide reads, in one-letter code: Large-conductance mechanosensitive channel (127 aa).

The next 2 membrane-spanning stretches (helical) occupy residues 14-34 (VLDLAVGVIIGGAFTGLVKSL) and 69-89 (GAFLNDVINFLITAFVVFLIV).

The protein belongs to the MscL family. In terms of assembly, homopentamer.

The protein resides in the cell membrane. Functionally, channel that opens in response to stretch forces in the membrane lipid bilayer. May participate in the regulation of osmotic pressure changes within the cell. This Leuconostoc mesenteroides subsp. mesenteroides (strain ATCC 8293 / DSM 20343 / BCRC 11652 / CCM 1803 / JCM 6124 / NCDO 523 / NBRC 100496 / NCIMB 8023 / NCTC 12954 / NRRL B-1118 / 37Y) protein is Large-conductance mechanosensitive channel.